A 263-amino-acid polypeptide reads, in one-letter code: HTH-type transcriptional regulator KdgR (263 aa).

Residues 13–74 (VSSVLKVFGI…GESEKYSLTL (62 aa)) enclose the HTH iclR-type domain. Residues 34–53 (ITELSQRVMMSKSTVYRFLQ) constitute a DNA-binding region (H-T-H motif). The IclR-ED domain maps to 89–258 (LIRSADIQMR…ARKISAQMGY (170 aa)).

It is found in the cytoplasm. Transcriptional repressor that negatively regulates the expression of kdgT, kdgK and kdgA, which encode proteins involved in transport and catabolism of 2-keto-3-deoxygluconate (KDG). Also represses expression of eda, which encodes the Entner-Doudoroff aldolase, by binding to its P2 promoter region. The protein is HTH-type transcriptional regulator KdgR of Escherichia coli (strain K12).